The sequence spans 272 residues: Inositol monophosphatase (272 aa).

Mg(2+)-binding residues include glutamate 71, aspartate 90, isoleucine 92, and aspartate 93. Glutamate 71 is a binding site for substrate. Residues 92–95 (IDGT), 194–196 (GTA), glutamate 213, and aspartate 220 each bind substrate. Residue aspartate 220 coordinates Mg(2+).

This sequence belongs to the inositol monophosphatase superfamily. Mg(2+) is required as a cofactor.

The protein resides in the cytoplasm. It catalyses the reaction a myo-inositol phosphate + H2O = myo-inositol + phosphate. The catalysed reaction is alpha-D-galactose 1-phosphate + H2O = D-galactose + phosphate. It participates in polyol metabolism; myo-inositol biosynthesis; myo-inositol from D-glucose 6-phosphate: step 2/2. With respect to regulation, inhibited by Li(+), Ca(2+) and Mn(2+), but also by Mg(2+) at concentrations above 3 mM. Functionally, responsible for the provision of inositol required for synthesis of phosphatidylinositol and polyphosphoinositides. Has broad substrate specificity and can use myo-inositol monophosphates, myo-inositol 1,3-diphosphate, myo-inositol 1,4-diphosphate, scyllo-inositol-phosphate, D-galactose 1-phosphate, glucose-1-phosphate, glucose-6-phosphate, fructose-1-phosphate, beta-glycerophosphate, and 2'-AMP as substrates. The protein is Inositol monophosphatase (impa1) of Dictyostelium discoideum (Social amoeba).